The primary structure comprises 615 residues: MFS-type transporter 1 (615 aa).

The tract at residues 1 to 85 is disordered; sequence MTALAAVPDL…GNNVSPHGRH (85 aa). The segment covering 16-53 has biased composition (polar residues); the sequence is PSTTTVHSPNYSGSPADISSSPTTRAVSRNTARQTASA. N25 carries N-linked (GlcNAc...) asparagine glycosylation. 6 helical membrane passes run 94–114, 138–158, 162–182, 192–212, 222–242, and 251–271; these read CLVI…SGIL, VYSL…HIIG, VWIT…RSAT, VLGV…TNGF, FAFQ…LGGI, and FGFY…LVVL. N-linked (GlcNAc...) asparagine glycosylation occurs at N302. 8 consecutive transmembrane segments (helical) span residues 320–340, 351–371, 397–417, 432–452, 455–475, 488–508, 522–542, and 585–605; these read WTGT…FSVV, QNIA…LWVG, AAVF…ALYF, FLPM…LVET, VRWL…IMAL, FAML…NLII, AVFN…TAVV, and AAFW…FLGL.

This sequence belongs to the major facilitator superfamily. EmrB family.

Its subcellular location is the membrane. MFS-type transporter; part of the gene cluster that mediates the biosynthesis of pyriculol and pyriculariol, two heptaketides that induce lesion formation upon application on rice leaves but are dispensable for pathogenicity. With the ABC transporter ABC7, is most likely responsible for pyriculol and pyriculariol secretion and thereby may contribute to intrinsic resistance. This chain is MFS-type transporter 1, found in Pyricularia oryzae (strain 70-15 / ATCC MYA-4617 / FGSC 8958) (Rice blast fungus).